Here is a 362-residue protein sequence, read N- to C-terminus: Protein ABHD12B (362 aa).

Belongs to the serine esterase family.

This Homo sapiens (Human) protein is Protein ABHD12B.